Reading from the N-terminus, the 224-residue chain is ATP phosphoribosyltransferase (224 aa).

This sequence belongs to the ATP phosphoribosyltransferase family. Short subfamily. In terms of assembly, heteromultimer composed of HisG and HisZ subunits.

It is found in the cytoplasm. It carries out the reaction 1-(5-phospho-beta-D-ribosyl)-ATP + diphosphate = 5-phospho-alpha-D-ribose 1-diphosphate + ATP. It participates in amino-acid biosynthesis; L-histidine biosynthesis; L-histidine from 5-phospho-alpha-D-ribose 1-diphosphate: step 1/9. Catalyzes the condensation of ATP and 5-phosphoribose 1-diphosphate to form N'-(5'-phosphoribosyl)-ATP (PR-ATP). Has a crucial role in the pathway because the rate of histidine biosynthesis seems to be controlled primarily by regulation of HisG enzymatic activity. The polypeptide is ATP phosphoribosyltransferase (Cupriavidus taiwanensis (strain DSM 17343 / BCRC 17206 / CCUG 44338 / CIP 107171 / LMG 19424 / R1) (Ralstonia taiwanensis (strain LMG 19424))).